We begin with the raw amino-acid sequence, 7603 residues long: Cysteine repeat modular protein B (7603 aa).

N-linked (GlcNAc...) asparagine glycosylation occurs at Asn-172. The helical transmembrane segment at 223-243 (LVGFFLVPVFVVFFVLSSDAT) threads the bilayer. Disordered regions lie at residues 248-275 (GVGVLSARADREEKSSVSSSSRASSSPG) and 291-323 (RDTKAAGYTGRSSRRSARARRRRAADGGEGKGF). The segment covering 263–275 (SVSSSSRASSSPG) has biased composition (low complexity). Residues 302–313 (SSRRSARARRRR) show a composition bias toward basic residues. N-linked (GlcNAc...) asparagine glycosylation is found at Asn-329, Asn-589, Asn-848, Asn-1128, Asn-1183, and Asn-1402. Residues 1554 to 1574 (VLRSRSGPSHPSSVSQPSPSF) form a disordered region. Low complexity predominate over residues 1557–1573 (SRSGPSHPSSVSQPSPS). N-linked (GlcNAc...) asparagine glycans are attached at residues Asn-1622, Asn-2578, Asn-2664, Asn-3094, and Asn-3126. The interval 3316–3445 (SNAVPEADEN…SDLTTSQPED (130 aa)) is disordered. The segment covering 3321 to 3340 (EADENQVESAEPEQNAEGET) has biased composition (acidic residues). Positions 3342-3360 (EQGAEEAGGNAAEPGAESG) are enriched in low complexity. N-linked (GlcNAc...) asparagine glycosylation is found at Asn-3546, Asn-4367, Asn-4823, Asn-4901, Asn-5186, Asn-5546, and Asn-5666. The segment at 5758-5799 (LAESRSDDGTVGDDVDLDDNALSGTTNSGWTTSSSNSERVRK) is disordered. Residues 5767–5776 (TVGDDVDLDD) are compositionally biased toward acidic residues. Residues 5780–5794 (SGTTNSGWTTSSSNS) are compositionally biased toward low complexity. Residues Asn-5806, Asn-5876, Asn-5998, Asn-6055, and Asn-6369 are each glycosylated (N-linked (GlcNAc...) asparagine). Positions 6043–6115 (GEADHTPADG…EASEAESVSA (73 aa)) are disordered. Residues 6051–6060 (DGSSNSSEDS) are compositionally biased toward polar residues. A compositionally biased stretch (basic and acidic residues) spans 6391-6405 (EFTDTGPAPDDHTDE). Residues 6391-6436 (EFTDTGPAPDDHTDEGGANLDSTGGSGEPSSSAPVDPSGENEGQLL) form a disordered region. Residues 6410–6423 (LDSTGGSGEPSSSA) show a composition bias toward polar residues. Asn-6453 is a glycosylation site (N-linked (GlcNAc...) asparagine). The next 8 membrane-spanning stretches (helical) occupy residues 6520–6540 (IFILMRLVVCGIIWIITALTI), 6552–6572 (VLIRIVMSHMFFLSVYGLMPA), 6578–6598 (LAGWASIYRLFFFEFYFALHP), 6627–6647 (IFVPFIDAVLLTIIGAICVAT), 6770–6790 (LILGGVGLLVWGVGSIAGFVA), 6831–6851 (CVALIITMYVHANASGAQEIF), 6888–6908 (GLMVNIIIGVIFQGSYYFEVF), and 6912–6932 (GAIPLAVAIFYYLYVLWSLFV). Asn-7013 is a glycosylation site (N-linked (GlcNAc...) asparagine). A helical transmembrane segment spans residues 7017–7037 (FVAALSDSLSQLVIAWCQFTI). Asn-7061 is a glycosylation site (N-linked (GlcNAc...) asparagine). The stretch at 7174–7242 (APQLRKENHA…RGLIESEIDD (69 aa)) forms a coiled coil. A disordered region spans residues 7379 to 7603 (AAPAAGLRSH…LKKPGSPKQE (225 aa)). The span at 7408–7417 (LGTNLSTPSA) shows a compositional bias: polar residues. An N-linked (GlcNAc...) asparagine glycan is attached at Asn-7411. Composition is skewed to low complexity over residues 7474-7496 (PTPSRSPSGTTRTVGSVVRSVTP), 7509-7541 (SEAPLISPSASSLASPRSLSPLTERRGSQSSDL), and 7560-7582 (GEAAPAEAPSPSPRSSSPLAAQP).

In terms of assembly, component of a complex, at least composed of cysteine repeat modular protein A (CRMPa), cysteine repeat modular protein B (CRMPb), micronemal protein 15 (MIC15) and thrombospondin type 1 domain-containing protein (TSP1).

Its subcellular location is the cell membrane. The protein localises to the endoplasmic reticulum. The protein resides in the golgi apparatus. Required for triggering rhoptry secretion. Plays a role in host cell invasion. The polypeptide is Cysteine repeat modular protein B (Toxoplasma gondii).